Here is a 240-residue protein sequence, read N- to C-terminus: MKILLIGYGAMNQRVARLAEEKNHEIVGVIVRNSEKHYPYPTFEHISEATEADVAIDFSNPELLLPLLEEDFNLPVVIATTGEKEQIIDKLKALSTDMPVFFSANMSYGVHALTKILEAAVPLLQDFDIELTEAHHNKKVDAPSGTLVKLYDVIESLRETTTPVYDRHETTEKRTQDEIGIHSIRGGTIVGEHDVLFAGTDETIEITHRAQSKDIFANGAISAAEKLVQNKNGYYTFDNL.

NAD(+) contacts are provided by residues 79–81 (ATT) and 103–106 (SANM). His135 functions as the Proton donor/acceptor in the catalytic mechanism. A (S)-2,3,4,5-tetrahydrodipicolinate-binding site is contributed by His136. Lys139 (proton donor) is an active-site residue. 145-146 (GT) is a binding site for (S)-2,3,4,5-tetrahydrodipicolinate.

The protein belongs to the DapB family.

Its subcellular location is the cytoplasm. The enzyme catalyses (S)-2,3,4,5-tetrahydrodipicolinate + NAD(+) + H2O = (2S,4S)-4-hydroxy-2,3,4,5-tetrahydrodipicolinate + NADH + H(+). It catalyses the reaction (S)-2,3,4,5-tetrahydrodipicolinate + NADP(+) + H2O = (2S,4S)-4-hydroxy-2,3,4,5-tetrahydrodipicolinate + NADPH + H(+). The protein operates within amino-acid biosynthesis; L-lysine biosynthesis via DAP pathway; (S)-tetrahydrodipicolinate from L-aspartate: step 4/4. In terms of biological role, catalyzes the conversion of 4-hydroxy-tetrahydrodipicolinate (HTPA) to tetrahydrodipicolinate. The protein is 4-hydroxy-tetrahydrodipicolinate reductase of Staphylococcus saprophyticus subsp. saprophyticus (strain ATCC 15305 / DSM 20229 / NCIMB 8711 / NCTC 7292 / S-41).